A 601-amino-acid polypeptide reads, in one-letter code: Elongation factor 4 (601 aa).

The tr-type G domain occupies 7–189 (RNIRNFSIIA…AIVHRIPPPK (183 aa)). Residues 19–24 (DHGKST) and 136–139 (NKID) each bind GTP.

This sequence belongs to the TRAFAC class translation factor GTPase superfamily. Classic translation factor GTPase family. LepA subfamily.

It is found in the cell inner membrane. It carries out the reaction GTP + H2O = GDP + phosphate + H(+). Its function is as follows. Required for accurate and efficient protein synthesis under certain stress conditions. May act as a fidelity factor of the translation reaction, by catalyzing a one-codon backward translocation of tRNAs on improperly translocated ribosomes. Back-translocation proceeds from a post-translocation (POST) complex to a pre-translocation (PRE) complex, thus giving elongation factor G a second chance to translocate the tRNAs correctly. Binds to ribosomes in a GTP-dependent manner. This Xanthomonas campestris pv. campestris (strain ATCC 33913 / DSM 3586 / NCPPB 528 / LMG 568 / P 25) protein is Elongation factor 4.